Here is a 317-residue protein sequence, read N- to C-terminus: Apolipoprotein E (317 aa).

Positions 1–18 (MKVLWAALLVTFLAGCQA) are cleaved as a signal peptide. A run of 8 repeats spans residues 80-101 (TLMDETMKELKAYKSELEEQLS), 102-123 (PVAEETRARLSKELQAAQARLG), 124-145 (ADMEDVRSRLVQYRSEVQAMLG), 146-167 (QSTEELRARLASHLRKLRKRLL), 168-189 (RDADDLQKRLAVYQAGAREGAE), 190-211 (RGVSAIRERLGPLVEQGRVRAA), 212-233 (TVGSLASQPLQERAQALGERLR), and 234-255 (ARMEEMGSRTRDRLDEVKEQVA). The tract at residues 80–255 (TLMDETMKEL…RLDEVKEQVA (176 aa)) is 8 X 22 AA approximate tandem repeats. M143 bears the Methionine sulfoxide mark. S147 is modified (phosphoserine). Positions 158–168 (HLRKLRKRLLR) are LDL and other lipoprotein receptors binding. A heparin-binding site is contributed by 162–165 (LRKR). The lipid-binding and lipoprotein association stretch occupies residues 210–290 (AATVGSLASQ…SWFEPLVEDM (81 aa)). O-linked (GalNAc...) threonine glycosylation is present at T212. Heparin is bound at residue 229-236 (GERLRARM). Positions 266–317 (QQISLQAEAFQARLKSWFEPLVEDMQRQWAGLVEKVQAAVGASTAPVPSDNH) are homooligomerization. The tract at residues 278–290 (RLKSWFEPLVEDM) is specificity for association with VLDL.

It belongs to the apolipoprotein A1/A4/E family. As to quaternary structure, homotetramer. May interact with ABCA1; functionally associated with ABCA1 in the biogenesis of HDLs. May interact with APP/A4 amyloid-beta peptide; the interaction is extremely stable in vitro but its physiological significance is unclear. May interact with MAPT. May interact with MAP2. In the cerebrospinal fluid, interacts with secreted SORL1. Interacts with PMEL; this allows the loading of PMEL luminal fragment on ILVs to induce fibril nucleation. In terms of processing, APOE exists as multiple glycosylated and sialylated glycoforms within cells and in plasma. The extent of glycosylation and sialylation are tissue and context specific. Glycated in plasma VLDL. Post-translationally, phosphorylated by FAM20C in the extracellular medium.

It is found in the secreted. The protein resides in the extracellular space. It localises to the extracellular matrix. Its subcellular location is the extracellular vesicle. The protein localises to the endosome. It is found in the multivesicular body. Functionally, APOE is an apolipoprotein, a protein associating with lipid particles, that mainly functions in lipoprotein-mediated lipid transport between organs via the plasma and interstitial fluids. APOE is a core component of plasma lipoproteins and is involved in their production, conversion and clearance. Apolipoproteins are amphipathic molecules that interact both with lipids of the lipoprotein particle core and the aqueous environment of the plasma. As such, APOE associates with chylomicrons, chylomicron remnants, very low density lipoproteins (VLDL) and intermediate density lipoproteins (IDL) but shows a preferential binding to high-density lipoproteins (HDL). It also binds a wide range of cellular receptors including the LDL receptor/LDLR, the LDL receptor-related proteins LRP1, LRP2 and LRP8 and the very low-density lipoprotein receptor/VLDLR that mediate the cellular uptake of the APOE-containing lipoprotein particles. Finally, APOE also has a heparin-binding activity and binds heparan-sulfate proteoglycans on the surface of cells, a property that supports the capture and the receptor-mediated uptake of APOE-containing lipoproteins by cells. A main function of APOE is to mediate lipoprotein clearance through the uptake of chylomicrons, VLDLs, and HDLs by hepatocytes. APOE is also involved in the biosynthesis by the liver of VLDLs as well as their uptake by peripheral tissues ensuring the delivery of triglycerides and energy storage in muscle, heart and adipose tissues. By participating in the lipoprotein-mediated distribution of lipids among tissues, APOE plays a critical role in plasma and tissues lipid homeostasis. APOE is also involved in two steps of reverse cholesterol transport, the HDLs-mediated transport of cholesterol from peripheral tissues to the liver, and thereby plays an important role in cholesterol homeostasis. First, it is functionally associated with ABCA1 in the biogenesis of HDLs in tissues. Second, it is enriched in circulating HDLs and mediates their uptake by hepatocytes. APOE also plays an important role in lipid transport in the central nervous system, regulating neuron survival and sprouting. The sequence is that of Apolipoprotein E (APOE) from Macaca nemestrina (Pig-tailed macaque).